Here is a 691-residue protein sequence, read N- to C-terminus: MSSTSLAWPRTAKSSLLQSADFSSTSKGYDRLGRRAREKLLDREFFLSLLNSASTKREAKSYLARLKAQHSPKPQVKEPEKESKDDAPQPLPSGVNLGSFYGASRSVYDSPVFRHDSTPTPHREISEERLHLSLVKLTTPQLLDDYIIDGVAKTLSQLNRLGMASCVVVDPGAGDHPNALRKIAAEQADRLSNAIDALPDSKSAHLDSVLSLSSTDPDTPTVMSRKALLSPMRDGHIVVVAPIAYTDDVRAVVVPADNAVLALTKELAGLATRPDPDEDPWVTAQRIGDLQREVSLDRVILLDPLGGIPAFSGPQTSHVFINMEQEFDDIEQELLRVRESAASSNQPSASSLLDGDASSIADSNPISKFVNHDVVPVPPEQEAVLPGLRLEERAVDGHLENLSLSQKVLAMLPSASSGIITSPLEVANSAMAPQTTPSGLAVGTRRQRNPLIHNLLTDKPLLSSSLPLSRRAAINGRRGSLTAPSSHTTFVKRGMPLTLVPNPRVQTWTAQNRPRMSLDDPSIDLPRLVHLIEDSFNRKLDVQDYLNRIHDRLAGLIIAGEYEGGAILTWELPPGVEDDGSPASEARMVPYLDKFAVLKRSQGAGGVADIVFNAMVRSCFPNGVCWRSRKDNPVNKWYFERSEGTWKLADTNWTMFWTTPNLPDDLQRFQDYEAVCRSIQPSWADDTGVVD.

A compositionally biased stretch (polar residues) spans 1–27; that stretch reads MSSTSLAWPRTAKSSLLQSADFSSTSK. Disordered stretches follow at residues 1–29 and 65–95; these read MSST…SKGY and RLKA…PSGV. Residues 75 to 87 are compositionally biased toward basic and acidic residues; that stretch reads QVKEPEKESKDDA. Residues 512-681 form the N-acetyltransferase domain; that stretch reads NRPRMSLDDP…YEAVCRSIQP (170 aa).

Belongs to the acetyltransferase family.

The protein resides in the mitochondrion. It catalyses the reaction L-glutamate + acetyl-CoA = N-acetyl-L-glutamate + CoA + H(+). It participates in amino-acid biosynthesis; L-arginine biosynthesis; N(2)-acetyl-L-ornithine from L-glutamate: step 1/4. N-acetylglutamate synthase involved in arginine biosynthesis. The chain is Amino-acid acetyltransferase, mitochondrial (arg2) from Aspergillus terreus (strain NIH 2624 / FGSC A1156).